Here is a 21-residue protein sequence, read N- to C-terminus: Large ribosomal subunit protein uL30 (21 aa).

The segment covering 1–15 (AKTENKTVTVRQTAS) has biased composition (polar residues). Positions 1–21 (AKTENKTVTVRQTASPIXXXK) are disordered.

Belongs to the universal ribosomal protein uL30 family. Part of the 50S ribosomal subunit.

In Brevundimonas diminuta (Pseudomonas diminuta), this protein is Large ribosomal subunit protein uL30 (rpmD).